The sequence spans 155 residues: Small ribosomal subunit protein uS7 (155 aa).

This sequence belongs to the universal ribosomal protein uS7 family. In terms of assembly, part of the 30S ribosomal subunit. Contacts proteins S9 and S11.

In terms of biological role, one of the primary rRNA binding proteins, it binds directly to 16S rRNA where it nucleates assembly of the head domain of the 30S subunit. Is located at the subunit interface close to the decoding center, probably blocks exit of the E-site tRNA. This Cytophaga hutchinsonii (strain ATCC 33406 / DSM 1761 / CIP 103989 / NBRC 15051 / NCIMB 9469 / D465) protein is Small ribosomal subunit protein uS7.